The chain runs to 253 residues: DNA repair protein RecO (253 aa).

The protein belongs to the RecO family.

Involved in DNA repair and RecF pathway recombination. The polypeptide is DNA repair protein RecO (Nitrobacter hamburgensis (strain DSM 10229 / NCIMB 13809 / X14)).